Consider the following 237-residue polypeptide: DCN1-like protein 5 (237 aa).

3 positions are modified to phosphoserine: serine 9, serine 41, and serine 48. The DCUN1 domain occupies 46 to 232 (FSSKKCLAWF…LLDEFVEWQK (187 aa)).

Part of a complex that contains DCUN1D5, CUL1 and RBX1; this interaction is bridged by CUL1. Interacts (via the DCUN1 domain) with the unneddylated cullins: interacts with CUL1, CUL2, CUL3, CUL4A, CUL4B and CUL5; these interactions promote the cullin neddylation and the identity of the cullin dictates the affinity of the interaction. Interacts (via DCUN1 domain) with UBE2M (N-terminally acetylated form) and probably with UBE2F (N-terminally acetylated form). May also interact with regulators or subunits of cullin-RING ligases such as RBX1, RNF7, ELOB and DDB1; these interactions are bridged by cullins. Interacts with CAND1; this interaction is bridged by cullins and strongly inhibits the neddylation of cullins. These CAND-cullin-DCNL complexes can only be neddylated in the presence of a substrate adapter. In terms of processing, phosphorylation at Ser-41 is independent of cullin's interaction. Phosphorylated in response to both TICAM1 and MYD88 dependent Toll-like receptor (TLR) pathway activation. Phosphorylated in response to IL1B stimulation.

It is found in the nucleus. The protein localises to the cytoplasm. The protein resides in the cytoskeleton. It localises to the spindle. Its function is as follows. Contributes to the neddylation of all cullins by transferring NEDD8 from N-terminally acetylated NEDD8-conjugating E2s enzyme to different cullin C-terminal domain-RBX complexes which is necessary for the activation of cullin-RING E3 ubiquitin ligases (CRLs). May play a role in DNA damage response and may participate in cell proliferation and anchorage-independent cell growth. This is DCN1-like protein 5 from Pongo abelii (Sumatran orangutan).